A 422-amino-acid chain; its full sequence is Cytochrome P-450 monooxygenase DoxA (422 aa).

C369 is a binding site for heme.

This sequence belongs to the cytochrome P450 family. As to quaternary structure, monomer. Heme serves as cofactor.

Its subcellular location is the cytoplasm. It carries out the reaction 13-deoxydaunorubicin + NADPH + O2 + H(+) = 13-dihydrodaunorubicin + NADP(+) + H2O. It catalyses the reaction 13-dihydrodaunorubicin + NADPH + O2 + H(+) = daunorubicin + NADP(+) + 2 H2O. The enzyme catalyses 13-deoxycarminomycin + NADPH + O2 + H(+) = 13-dihydrocarminomycin + NADP(+) + H2O. The catalysed reaction is 13-dihydrocarminomycin + NADPH + O2 + H(+) = carminomycin + NADP(+) + 2 H2O. The protein operates within antibiotic biosynthesis; daunorubicin biosynthesis. Its pathway is antibiotic biosynthesis; carminomycin biosynthesis. Its activity is regulated as follows. Strongly inhibited by dithiothreitol and high ionic strength buffers. Functionally, involved in the biosynthesis of the anthracyclines carminomycin and daunorubicin (daunomycin) which are aromatic polyketide antibiotics that exhibit high cytotoxicity and are widely applied in the chemotherapy of a variety of cancers. In vivo, DoxA catalyzes the C-13 hydroxylation of 13-deoxycarminomycin and 13-deoxydaunorubicin to yield 13-dihydrocarminomycin and 13-dihydrodaunorubicin, respectively, as well as the oxidation of these 13-dihydro-anthracyclines to their respective 13-keto forms, carminomycin and daunorubicin. In vitro, it also catalyzes the C-14 hydroxylation of daunorubicin to form doxorubicin (adriamycin), although this strain is not a doxorubicin producer. It is not able to accept anthracyclinones (aglycones) and anthracyclines with a 10-carbomethoxyl moiety. 13-oxidation of the anthracyclines possessing the 4-methoxy substitution is greatly favored. The anthracycline analog desacetyladriamycin can be oxidized to 10-hydroxydesacetyladriamycin. It can only use NADP. DoxA acts jointly with DauV. This chain is Cytochrome P-450 monooxygenase DoxA (doxA), found in Streptomyces sp. (strain C5).